A 557-amino-acid polypeptide reads, in one-letter code: Interferon alpha/beta receptor 1 (557 aa).

The N-terminal stretch at 1–27 (MMVVLLGATTLVLVAVAPWVLSAAAGG) is a signal peptide. The Extracellular segment spans residues 28-436 (KNLKSPQKVE…EKTKPGNTSK (409 aa)). Fibronectin type-III domains follow at residues 32–126 (SPQK…FRKA), 127–227 (QIGP…TVEN), 231–329 (PPEN…TEIQ), and 331–432 (FLLP…TKPG). 6 N-linked (GlcNAc...) asparagine glycosylation sites follow: asparagine 50, asparagine 58, asparagine 81, asparagine 88, asparagine 110, and asparagine 172. A disulfide bond links cysteine 79 and cysteine 87. Cysteines 199 and 220 form a disulfide. N-linked (GlcNAc...) asparagine glycosylation occurs at asparagine 254. Cysteine 283 and cysteine 291 are disulfide-bonded. N-linked (GlcNAc...) asparagine glycans are attached at residues asparagine 313, asparagine 314, asparagine 376, asparagine 416, and asparagine 433. Cysteine 403 and cysteine 426 are oxidised to a cystine. The chain crosses the membrane as a helical span at residues 437–457 (IWLIVGICIALFALPFVIYAA). The Cytoplasmic portion of the chain corresponds to 458–557 (KVFLRCINYV…TSEELQQDFV (100 aa)). Cysteine 463 is lipidated: S-palmitoyl cysteine. Phosphotyrosine; by TYK2 occurs at positions 466 and 481. The important for interaction with TYK2 stretch occupies residues 491–500 (LLSTSEEQIE). Serine 495 is modified (phosphoserine). Glycyl lysine isopeptide (Lys-Gly) (interchain with G-Cter in ubiquitin) cross-links involve residues lysine 501, lysine 525, and lysine 526. The segment at 516–557 (ETNQTDEDHKKYSSQTSQDSGNYSNEDESESKTSEELQQDFV) is disordered. A compositionally biased stretch (polar residues) spans 528-539 (SSQTSQDSGNYS). Serine 535 carries the post-translational modification Phosphoserine.

It belongs to the type II cytokine receptor family. In terms of assembly, heterodimer with IFNAR2; forming the receptor for type I interferon. Interacts with TYK2. Interacts with STAT1 and STAT2; the interaction requires its phosphorylation at Tyr-466. Interacts (serine-phosphorylated form) with FBXW11, the substrate recognition component of a SCF (SKP1-CUL1-F-box protein) E3 ubiquitin-protein ligase complex. Interacts with SHMT2; this promotes interaction with ABRAXAS2 and the BRISC complex. Interacts with TRIM10; this interaction prevents association between IFNAR1 and TYK2. Post-translationally, ubiquitinated, leading to its internalization and degradation. Polyubiquitinated via 'Lys-48'-linked and 'Lys-63'-linked ubiquitin chains, leading to receptor internalization and lysosomal degradation. The 'Lys-63'-linked ubiquitin chains are cleaved off by the BRISC complex. Phosphorylated on tyrosine residues in response to interferon-binding: phosphorylation by TYK2 tyrosine kinase creates docking sites for STAT proteins. Phosphorylated on serine residues in response to interferon binding; this promotes interaction with FBXW11 and ubiquitination. In terms of processing, palmitoylation at Cys-463 is required for the activation of STAT1 and STAT2. IFN receptors are present in all tissues and even on the surface of most IFN-resistant cells. Isoform 1, isoform 2 and isoform 3 are expressed in the IFN-alpha sensitive myeloma cell line U266B1. Isoform 2 and isoform 3 are expressed in the IFN-alpha resistant myeloma cell line U266R. Isoform 1 is not expressed in IFN-alpha resistant myeloma cell line U266R.

Its subcellular location is the cell membrane. It is found in the late endosome. It localises to the lysosome. Together with IFNAR2, forms the heterodimeric receptor for type I interferons (including interferons alpha, beta, epsilon, omega and kappa). Type I interferon binding activates the JAK-STAT signaling cascade, resulting in transcriptional activation or repression of interferon-regulated genes that encode the effectors of the interferon response. Mechanistically, type I interferon-binding brings the IFNAR1 and IFNAR2 subunits into close proximity with one another, driving their associated Janus kinases (JAKs) (TYK2 bound to IFNAR1 and JAK1 bound to IFNAR2) to cross-phosphorylate one another. The activated kinases phosphorylate specific tyrosine residues on the intracellular domains of IFNAR1 and IFNAR2, forming docking sites for the STAT transcription factors. STAT proteins are then phosphorylated by the JAKs, promoting their translocation into the nucleus to regulate expression of interferon-regulated genes. Can also act independently of IFNAR2: form an active IFNB1 receptor by itself and activate a signaling cascade that does not involve activation of the JAK-STAT pathway. This chain is Interferon alpha/beta receptor 1 (IFNAR1), found in Homo sapiens (Human).